The sequence spans 747 residues: MTILSGTTAAPRVNGTTMNGHSKPHTNGVHLNGHAPKATTESPWPQSEEKTLLDKFVEAYYEFESYKSGQTVKVDGKTLSLAGVVAAARHHAKISLDDSASIKDKVVKSRKVIADKVASGASVYGLSTGFGGSADTRTDQPLSLGHALLQHQHVGVLPSSSQPLDVLPLSDPMSATSMPEAWVRAAMLIRMNSLIRGHSGVRWELIEKIAEIFDANITPVVPLRSSISASGDLSPLSYIAGTVVGNPSIRVFDGPAAFGAREMVPSAKALASHGIDPLPLASKEPLGILNGTAFSAAVGALALNEAVHFAMLAQVCTAMGTEALVGTRLSFEPFIHATCRPHPGQIEAARNIYNLLEGTTFASVHHEEVHIAEDQGTLRQDRYPLRTSPQFLGPQLEDILHAYVSVTQECNSTTDNPLIDGETGEIHHGGNFQAMAVTNAMEKTRLALHHIGKLLFAQCTELVNPAMNNGLPPSLAATDPSLNYHTKGIDIATAAYVSELGYLANPVSTHIQSAEMHNQAVNSLALISARATVNSLDVLSLLISSYLYILCQALDLRALQMEFVKGVEEIIREELSLLFASVVSPAELEALTSKVLSAAQTSLDTSGSMDAPARMKKMASTTTIPLFDFLTELTLPDAISSGIAMVSIPSFRSHLASRATALLDQLRRDYLSGQRGAAPASPYLNKTRMVYEFVRLTLGVKMHGSENYARFAKGLGVEDETIGQNISRIHEAIRDGKMQAITVAMFA.

A compositionally biased stretch (polar residues) spans 1–20 (MTILSGTTAAPRVNGTTMNG). A disordered region spans residues 1 to 47 (MTILSGTTAAPRVNGTTMNGHSKPHTNGVHLNGHAPKATTESPWPQS). Tyr124 (proton donor/acceptor) is an active-site residue. Residues 229 to 231 (ASG) constitute a cross-link (5-imidazolinone (Ala-Gly)). Ser230 carries the post-translational modification 2,3-didehydroalanine (Ser). Asn290, Gln380, Arg386, Asn416, Lys487, Glu515, and Asn518 together coordinate (E)-cinnamate.

It belongs to the PAL/histidase family. As to quaternary structure, homotetramer. Contains an active site 4-methylidene-imidazol-5-one (MIO), which is formed autocatalytically by cyclization and dehydration of residues Ala-Ser-Gly.

It is found in the cytoplasm. The catalysed reaction is L-phenylalanine = (E)-cinnamate + NH4(+). The protein operates within phenylpropanoid metabolism; trans-cinnamate biosynthesis; trans-cinnamate from L-phenylalanine: step 1/1. Functionally, catalyzes the non-oxidative deamination of L-phenylalanine to form trans-cinnamic acid and a free ammonium ion. Facilitates the commitment step in phenylpropanoid pathways that produce secondary metabolites such as lignins, coumarins and flavonoids. The sequence is that of Phenylalanine ammonia-lyase 2 from Pleurotus ostreatus (Oyster mushroom).